The primary structure comprises 258 residues: Regulatory protein RecX (258 aa).

The protein belongs to the RecX family.

The protein resides in the cytoplasm. Functionally, modulates RecA activity. This is Regulatory protein RecX from Streptococcus sanguinis (strain SK36).